The primary structure comprises 130 residues: Small ribosomal subunit protein uS8z/uS8w (130 aa).

Belongs to the universal ribosomal protein uS8 family.

It localises to the cytoplasm. The sequence is that of Small ribosomal subunit protein uS8z/uS8w (RPS15AA) from Arabidopsis thaliana (Mouse-ear cress).